The following is a 632-amino-acid chain: ATP-dependent RNA helicase mrh4, mitochondrial (632 aa).

The transit peptide at 1 to 37 directs the protein to the mitochondrion; it reads MNRLGRMSLPLRSPACLICQTRTTTLIPSSWQTARSM. Residues 49 to 111 are disordered; it reads MALSPDVAKP…KEEAQKKESP (63 aa). The span at 97–111 shows a compositional bias: basic and acidic residues; it reads RSGDSKEEAQKKESP. Positions 141-174 match the Q motif motif; that stretch reads TSFDQFPLLPVVRNSIVSQALPGLMEVTPTPIQR. Residues 194–406 enclose the Helicase ATP-binding domain; that stretch reads DDDEPHYDQF…RKRYPDIKRL (213 aa). An ATP-binding site is contributed by 207–214; sequence AETGSGKT. The short motif at 353 to 356 is the DEAD box element; it reads DEAD. The region spanning 460–632 is the Helicase C-terminal domain; sequence FLEPKTKKIL…EGMFRGQALI (173 aa).

The protein belongs to the DEAD box helicase family. MRH4 subfamily.

The protein resides in the mitochondrion. The catalysed reaction is ATP + H2O = ADP + phosphate + H(+). Functionally, ATP-binding RNA helicase involved in mitochondrial RNA metabolism. Required for maintenance of mitochondrial DNA. This chain is ATP-dependent RNA helicase mrh4, mitochondrial (mrh4), found in Aspergillus clavatus (strain ATCC 1007 / CBS 513.65 / DSM 816 / NCTC 3887 / NRRL 1 / QM 1276 / 107).